Here is a 247-residue protein sequence, read N- to C-terminus: Lys-63-specific deubiquitinase BRCC36 (247 aa).

A2 carries the N-acetylalanine modification. In terms of domain architecture, MPN spans 12–179; sequence VHLESDAFLV…YTCFQSIQAQ (168 aa). Residues H122, H124, and D135 each coordinate Zn(2+). A JAMM motif motif is present at residues 122–135; that stretch reads HSHPHITVWPSHVD. A Phosphoserine modification is found at S189.

It belongs to the peptidase M67A family. BRCC36 subfamily. In terms of assembly, component of the ARISC complex, at least composed of UIMC1/RAP80, ABRAXAS1, BRCC3/BRCC36, BABAM2 and BABAM1/NBA1. Component of the BRCA1-A complex, at least composed of BRCA1, BARD1, UIMC1/RAP80, ABRAXAS1, BRCC3/BRCC36, BABAM2 and BABAM1/NBA1. In the BRCA1-A complex, interacts directly with ABRAXAS1 and BABAM2. Component of the BRISC complex, at least composed of ABRAXAS2, BRCC3/BRCC36, BABAM2 and BABAM1/NBA1. Identified in a complex with SHMT2 and the other subunits of the BRISC complex. In the BRISC complex, interacts directly with ABRAXAS2. Identified in a complex with ABRAXAS2 and NUMA1. The BRISC complex interacts with the CSN complex. Component of the BRCA1/BRCA2 containing complex (BRCC), which also contains BRCA1, BRCA2, BARD1, BABAM2 and RAD51. BRCC is a ubiquitin E3 ligase complex that enhances cellular survival following DNA damage. Interacts with BRCA1. Binds polyubiquitin. Interacts with PWWP2B. Interacts with HDAC1; this interaction is enhanced in the presence of PWWP2B. The cofactor is Zn(2+).

The protein localises to the nucleus. The protein resides in the cytoplasm. It is found in the cytoskeleton. Its subcellular location is the spindle pole. Functionally, metalloprotease that specifically cleaves 'Lys-63'-linked polyubiquitin chains. Does not have activity toward 'Lys-48'-linked polyubiquitin chains. Component of the BRCA1-A complex, a complex that specifically recognizes 'Lys-63'-linked ubiquitinated histones H2A and H2AX at DNA lesions sites, leading to target the BRCA1-BARD1 heterodimer to sites of DNA damage at double-strand breaks (DSBs). In the BRCA1-A complex, it specifically removes 'Lys-63'-linked ubiquitin on histones H2A and H2AX, antagonizing the RNF8-dependent ubiquitination at double-strand breaks (DSBs). Catalytic subunit of the BRISC complex, a multiprotein complex that specifically cleaves 'Lys-63'-linked ubiquitin in various substrates. Mediates the specific 'Lys-63'-specific deubiquitination associated with the COP9 signalosome complex (CSN), via the interaction of the BRISC complex with the CSN complex. The BRISC complex is required for normal mitotic spindle assembly and microtubule attachment to kinetochores via its role in deubiquitinating NUMA1. Plays a role in interferon signaling via its role in the deubiquitination of the interferon receptor IFNAR1; deubiquitination increases IFNAR1 activity by enhancing its stability and cell surface expression. Acts as a regulator of the NLRP3 inflammasome by mediating deubiquitination of NLRP3, leading to NLRP3 inflammasome assembly. Down-regulates the response to bacterial lipopolysaccharide (LPS) via its role in IFNAR1 deubiquitination. Deubiquitinates HDAC1 and PWWP2B leading to their stabilization. This Pongo abelii (Sumatran orangutan) protein is Lys-63-specific deubiquitinase BRCC36 (BRCC3).